The sequence spans 884 residues: MHPFSRLFRNIQSLGEEEVQELLGPPEDALPLLAGEDLNHRVADALNLHLPTADLQWVHKTNAITGLYSNQAAQFNPHWIQPEFPELHLHNDLIQKLQQYFGPLTINEKRKLQLNFPARFFPKATKYFPLIKGIKNNYPNFALEHFFATANYLWTLWEAGILYLRKNQTTLTFKGKPYSWEHRQLVQHNGQQHKSHLQSRQNSSMVACSGHLLHNHLSSESVSVSTRNLSNNISDKSQKSTRTGLCSYKQIQTDRLEHLARISCGSKITIGQQGSSPKTLYKSISSNFRNQTWAYNSSRNSGHTTWFSSASNSNKSRSREKAYSSNSTSKRYSPPLNYEKSDFSSPGVRRRITRLDNNGTPTQCLWRSFYNTKPCGSYCIHHIVSSLDDWGPCTVTGDVTIKSPRTPRRITGGVFLVDKNPNNSSESRLVVDFSQFSRGHTRVHWPKFAVPNLQTLANLLSTNLQWLSLDVSAAFYHIPISPAAVPHLLVGSPGLERFNTCLSSSTHNRNNSQLQTMHNLCTRHVYSSLLLLFKTYGRKLHLLAHPFIMGFRKLPMGVGLSPFLLAQFTSALASMVRRNFPHCVVFAYMDDLVLGARTSEHLTAIYSHICSVFLDLGIHLNVNKTKWWGNHLHFMGYVITSSGVLPQDKHVKKISRYLRSVPVNQPLDYKICERLTGILNYVAPFTLCGYAALMPLYHAITSRTAFIFSSLYKSWLLSLYEELWPVVRQRGVVCTVFADATPTGWGIATTYQLLSGTFAFPLPIATAELIAACLARCWTGARLLGTDNSVVLSGKLTSFPWLLACVANWILRGTSFCYVPSALNPADLPSRGLLPVLRPLPRLRLRPQTSRISLWAASPPVSPRRPVRVAWSSPVQNCEPWIPP.

The terminal protein domain (TP) stretch occupies residues 1 to 184 (MHPFSRLFRN…GKPYSWEHRQ (184 aa)). The tract at residues 185–387 (LVQHNGQQHK…YCIHHIVSSL (203 aa)) is spacer. Positions 299 to 345 (RNSGHTTWFSSASNSNKSRSREKAYSSNSTSKRYSPPLNYEKSDFSS) are disordered. Residues 388 to 729 (DDWGPCTVTG…YEELWPVVRQ (342 aa)) are polymerase/reverse transcriptase domain (RT). Positions 398–639 (DVTIKSPRTP…NHLHFMGYVI (242 aa)) constitute a Reverse transcriptase domain. 3 residues coordinate Mg(2+): D470, D590, and D591.

Belongs to the hepadnaviridae P protein family.

The catalysed reaction is DNA(n) + a 2'-deoxyribonucleoside 5'-triphosphate = DNA(n+1) + diphosphate. It catalyses the reaction Endonucleolytic cleavage to 5'-phosphomonoester.. Activated by host HSP70 and HSP40 in vitro to be able to bind the epsilon loop of the pgRNA. Because deletion of the RNase H region renders the protein partly chaperone-independent, the chaperones may be needed indirectly to relieve occlusion of the RNA-binding site by this domain. Inhibited by several reverse-transcriptase inhibitors: Lamivudine, Adefovir and Entecavir. In terms of biological role, multifunctional enzyme that converts the viral RNA genome into dsDNA in viral cytoplasmic capsids. This enzyme displays a DNA polymerase activity that can copy either DNA or RNA templates, and a ribonuclease H (RNase H) activity that cleaves the RNA strand of RNA-DNA heteroduplexes in a partially processive 3'- to 5'-endonucleasic mode. Neo-synthesized pregenomic RNA (pgRNA) are encapsidated together with the P protein, and reverse-transcribed inside the nucleocapsid. Initiation of reverse-transcription occurs first by binding the epsilon loop on the pgRNA genome, and is initiated by protein priming, thereby the 5'-end of (-)DNA is covalently linked to P protein. Partial (+)DNA is synthesized from the (-)DNA template and generates the relaxed circular DNA (RC-DNA) genome. After budding and infection, the RC-DNA migrates in the nucleus, and is converted into a plasmid-like covalently closed circular DNA (cccDNA). The activity of P protein does not seem to be necessary for cccDNA generation, and is presumably released from (+)DNA by host nuclear DNA repair machinery. In Woodchuck hepatitis B virus (isolate 7) (WHV), this protein is Protein P.